Here is a 369-residue protein sequence, read N- to C-terminus: Endoglucanase (369 aa).

Positions 1 to 22 (MMTMLRGWITMIVMLTAINAQA) are cleaved as a signal peptide. Catalysis depends on Glu-56, which acts as the Proton donor. Residue Asp-117 is the Nucleophile of the active site.

This sequence belongs to the glycosyl hydrolase 8 (cellulase D) family.

Its subcellular location is the secreted. The enzyme catalyses Endohydrolysis of (1-&gt;4)-beta-D-glucosidic linkages in cellulose, lichenin and cereal beta-D-glucans.. It functions in the pathway glycan metabolism; bacterial cellulose biosynthesis. Its function is as follows. Hydrolyzes carboxymethylcellulose. The chain is Endoglucanase (bcsZ) from Salmonella typhi.